Reading from the N-terminus, the 240-residue chain is MADIRITGRMVNFSRITFDTNDHDVIRQQLSNILNEGSYQGTVVIIDSTVEQELIALIQLLVSMGLQPMAVIDGILGDEARAIQFPVLPADQPLQRIKPTAEQVAIVEKPSSAQASVETKKPLNNNAVAHITSYHDEILRTGQSLVQDQGDIILKAGMNSGSEVIASGNIHIYGTVRGRVIAGAGGHAAARIFCQSLEAELVSIAGTYCVADDIPKHVVKKPVHIYLNEKQELEFEALEL.

It belongs to the MinC family. Interacts with MinD and FtsZ.

Cell division inhibitor that blocks the formation of polar Z ring septums. Rapidly oscillates between the poles of the cell to destabilize FtsZ filaments that have formed before they mature into polar Z rings. Prevents FtsZ polymerization. The sequence is that of Probable septum site-determining protein MinC from Acinetobacter baumannii (strain ACICU).